Here is an 87-residue protein sequence, read N- to C-terminus: Small ribosomal subunit protein uS17 (87 aa).

This sequence belongs to the universal ribosomal protein uS17 family. Part of the 30S ribosomal subunit.

In terms of biological role, one of the primary rRNA binding proteins, it binds specifically to the 5'-end of 16S ribosomal RNA. In Staphylococcus aureus (strain JH1), this protein is Small ribosomal subunit protein uS17.